The chain runs to 407 residues: Peptidase T (407 aa).

Zn(2+) is bound at residue His-82. The active site involves Asp-84. Asp-143 contacts Zn(2+). Glu-177 functions as the Proton acceptor in the catalytic mechanism. The Zn(2+) site is built by Glu-178, Asp-200, and His-382.

This sequence belongs to the peptidase M20B family. It depends on Zn(2+) as a cofactor.

Its subcellular location is the cytoplasm. It carries out the reaction Release of the N-terminal residue from a tripeptide.. Its function is as follows. Cleaves the N-terminal amino acid of tripeptides. The polypeptide is Peptidase T (Streptococcus equi subsp. equi (strain 4047)).